The chain runs to 83 residues: MPKADIHPTWYPEAKVICNGEVVMTVGSTQPEIHVEVWSGNHPFYTGTQKMIDTEGRVDRFLRKYGMIDKNKKKNQASDAKEK.

It belongs to the bacterial ribosomal protein bL31 family. Type A subfamily. As to quaternary structure, part of the 50S ribosomal subunit.

Its function is as follows. Binds the 23S rRNA. The chain is Large ribosomal subunit protein bL31 from Gloeothece citriformis (strain PCC 7424) (Cyanothece sp. (strain PCC 7424)).